The chain runs to 197 residues: 5'-deoxynucleotidase plu3092 (197 aa).

Residues 16-17 and histidine 31 each bind substrate; that span reads RW. In terms of domain architecture, HD spans 28–140; that stretch reads VSEHSLQVAF…IKQADSLCAY (113 aa). 3 residues coordinate a divalent metal cation: histidine 31, histidine 66, and aspartate 67. Residues aspartate 67, 75–78, and aspartate 135 contribute to the substrate site; that span reads DLPT. Aspartate 135 is an a divalent metal cation binding site.

It belongs to the 5DNU family. In terms of assembly, homodimer. It depends on a divalent metal cation as a cofactor.

It is found in the cytoplasm. It carries out the reaction a 2'-deoxyribonucleoside 5'-phosphate + H2O = a 2'-deoxyribonucleoside + phosphate. Catalyzes the strictly specific dephosphorylation of 2'-deoxyribonucleoside 5'-monophosphates. The protein is 5'-deoxynucleotidase plu3092 of Photorhabdus laumondii subsp. laumondii (strain DSM 15139 / CIP 105565 / TT01) (Photorhabdus luminescens subsp. laumondii).